Consider the following 128-residue polypeptide: Protein Wnt-2b-B (128 aa).

Cystine bridges form between Cys-3/Cys-16 and Cys-5/Cys-11. A lipid anchor (O-palmitoleoyl serine; by PORCN) is attached at Ser-8. Asn-48 is a glycosylation site (N-linked (GlcNAc...) asparagine). 2 disulfides stabilise this stretch: Cys-90/Cys-105 and Cys-127/Cys-128.

Belongs to the Wnt family. In terms of processing, palmitoleoylation is required for efficient binding to frizzled receptors. Depalmitoleoylation leads to Wnt signaling pathway inhibition.

It is found in the secreted. The protein resides in the extracellular space. Its subcellular location is the extracellular matrix. Its function is as follows. Ligand for members of the frizzled family of seven transmembrane receptors. Functions in the canonical Wnt/beta-catenin signaling pathway. This chain is Protein Wnt-2b-B (wnt2b-b), found in Xenopus laevis (African clawed frog).